Here is a 97-residue protein sequence, read N- to C-terminus: Coiled-coil domain-containing protein 167 (97 aa).

A coiled-coil region spans residues 2–78 (TKKKRENLGV…LLRHENRKNT (77 aa)). Residues 78 to 95 (TLLSVAIFTVFALLYAYW) form a helical membrane-spanning segment.

It localises to the membrane. This chain is Coiled-coil domain-containing protein 167 (Ccdc167), found in Mus musculus (Mouse).